The following is a 291-amino-acid chain: MPELPEVETVRKGLNQLTLNQEITGGDVLLNRTIAYPFSVGEFVDGIEKNAIATWHRRGKYLLAELSSPCSTSWLGVHLRMTGQLLWLHRDEPLHKHTRVRLFFGDQQELRFVDQRTFGKIWWVPPGVAVESIITGLAKLAADPFSPEFSVEYLASKLKNRRRPIKTALLDQSVVAGLGNIYADEALFKSGILPETLCIDLQLKQIELLRTAIIQVLETSIEAGGTTFSNFLNVKGTNGNYGGVAWVYNRAGEPCRVCGMPIQRIRLAGRSSHFCSECQTLRGVENRERRD.

Residue Pro-2 is the Schiff-base intermediate with DNA of the active site. Catalysis depends on Glu-3, which acts as the Proton donor. The active-site Proton donor; for beta-elimination activity is Lys-60. DNA is bound by residues His-97, Arg-116, and Arg-161. Residues Trp-246–Thr-280 form an FPG-type zinc finger. Arg-270 (proton donor; for delta-elimination activity) is an active-site residue.

This sequence belongs to the FPG family. As to quaternary structure, monomer. Requires Zn(2+) as cofactor.

It carries out the reaction Hydrolysis of DNA containing ring-opened 7-methylguanine residues, releasing 2,6-diamino-4-hydroxy-5-(N-methyl)formamidopyrimidine.. It catalyses the reaction 2'-deoxyribonucleotide-(2'-deoxyribose 5'-phosphate)-2'-deoxyribonucleotide-DNA = a 3'-end 2'-deoxyribonucleotide-(2,3-dehydro-2,3-deoxyribose 5'-phosphate)-DNA + a 5'-end 5'-phospho-2'-deoxyribonucleoside-DNA + H(+). In terms of biological role, involved in base excision repair of DNA damaged by oxidation or by mutagenic agents. Acts as a DNA glycosylase that recognizes and removes damaged bases. Has a preference for oxidized purines, such as 7,8-dihydro-8-oxoguanine (8-oxoG). Has AP (apurinic/apyrimidinic) lyase activity and introduces nicks in the DNA strand. Cleaves the DNA backbone by beta-delta elimination to generate a single-strand break at the site of the removed base with both 3'- and 5'-phosphates. This chain is Formamidopyrimidine-DNA glycosylase, found in Nostoc punctiforme (strain ATCC 29133 / PCC 73102).